Consider the following 121-residue polypeptide: Fluoride-specific ion channel FluC 2 (121 aa).

4 helical membrane-spanning segments follow: residues 3-23 (YLFIFLGGAVGALLRYLLSFI), 31-51 (IGTFIANLCGAFLMGFLGTLA), 64-84 (GITTGFIGSLTTFSTFQFELV), and 92-112 (FILLIVYALTSYIFGILLCFL). Gly-71 and Thr-74 together coordinate Na(+).

This sequence belongs to the fluoride channel Fluc/FEX (TC 1.A.43) family.

Its subcellular location is the cell membrane. It carries out the reaction fluoride(in) = fluoride(out). Its activity is regulated as follows. Na(+) is not transported, but it plays an essential structural role and its presence is essential for fluoride channel function. In terms of biological role, fluoride-specific ion channel. Important for reducing fluoride concentration in the cell, thus reducing its toxicity. This is Fluoride-specific ion channel FluC 2 from Staphylococcus saprophyticus subsp. saprophyticus (strain ATCC 15305 / DSM 20229 / NCIMB 8711 / NCTC 7292 / S-41).